A 139-amino-acid chain; its full sequence is Ribulose bisphosphate carboxylase small subunit (139 aa).

Belongs to the RuBisCO small chain family. In terms of assembly, heterohexadecamer of 8 large and 8 small subunits.

The protein resides in the plastid. The protein localises to the chloroplast. RuBisCO catalyzes two reactions: the carboxylation of D-ribulose 1,5-bisphosphate, the primary event in carbon dioxide fixation, as well as the oxidative fragmentation of the pentose substrate in the photorespiration process. Both reactions occur simultaneously and in competition at the same active site. Although the small subunit is not catalytic it is essential for maximal activity. This is Ribulose bisphosphate carboxylase small subunit from Pylaiella littoralis (Seaweed).